Here is a 323-residue protein sequence, read N- to C-terminus: Ferrochelatase (323 aa).

The Fe cation site is built by H196 and E277.

This sequence belongs to the ferrochelatase family.

Its subcellular location is the cytoplasm. The catalysed reaction is heme b + 2 H(+) = protoporphyrin IX + Fe(2+). The protein operates within porphyrin-containing compound metabolism; protoheme biosynthesis; protoheme from protoporphyrin-IX: step 1/1. Its function is as follows. Catalyzes the ferrous insertion into protoporphyrin IX. The sequence is that of Ferrochelatase from Haemophilus influenzae (strain 86-028NP).